Consider the following 218-residue polypeptide: tRNA (cytidine(56)-2'-O)-methyltransferase (218 aa).

Residues L81, 106-110, and 124-131 each bind S-adenosyl-L-methionine; these read GAEKV and IGNQPHSE. The interval 170 to 218 is disordered; sequence KVGEEGPSGGAPGVRAERGRGGRGEGVQGADEVRGHKRGATDRDLGDET. The segment covering 200 to 218 has biased composition (basic and acidic residues); the sequence is DEVRGHKRGATDRDLGDET.

The protein belongs to the aTrm56 family. In terms of assembly, homodimer.

The protein localises to the cytoplasm. It catalyses the reaction cytidine(56) in tRNA + S-adenosyl-L-methionine = 2'-O-methylcytidine(56) in tRNA + S-adenosyl-L-homocysteine + H(+). Its function is as follows. Specifically catalyzes the AdoMet-dependent 2'-O-ribose methylation of cytidine at position 56 in tRNAs. The protein is tRNA (cytidine(56)-2'-O)-methyltransferase of Ignicoccus hospitalis (strain KIN4/I / DSM 18386 / JCM 14125).